Here is a 274-residue protein sequence, read N- to C-terminus: 3-methyl-2-oxobutanoate hydroxymethyltransferase (274 aa).

Asp49 and Asp88 together coordinate Mg(2+). Residues Asp49 to Ser50, Asp88, and Lys118 contribute to the 3-methyl-2-oxobutanoate site. Residue Glu120 coordinates Mg(2+). Glu187 serves as the catalytic Proton acceptor.

It belongs to the PanB family. As to quaternary structure, homodecamer; pentamer of dimers. Requires Mg(2+) as cofactor.

It localises to the cytoplasm. The catalysed reaction is 3-methyl-2-oxobutanoate + (6R)-5,10-methylene-5,6,7,8-tetrahydrofolate + H2O = 2-dehydropantoate + (6S)-5,6,7,8-tetrahydrofolate. It functions in the pathway cofactor biosynthesis; (R)-pantothenate biosynthesis; (R)-pantoate from 3-methyl-2-oxobutanoate: step 1/2. Functionally, catalyzes the reversible reaction in which hydroxymethyl group from 5,10-methylenetetrahydrofolate is transferred onto alpha-ketoisovalerate to form ketopantoate. The chain is 3-methyl-2-oxobutanoate hydroxymethyltransferase from Rhodopseudomonas palustris (strain ATCC BAA-98 / CGA009).